The following is a 556-amino-acid chain: Arginine--tRNA ligase (556 aa).

The short motif at 132 to 142 (ANPTGPIHLGG) is the 'HIGH' region element.

This sequence belongs to the class-I aminoacyl-tRNA synthetase family. As to quaternary structure, monomer.

The protein resides in the cytoplasm. The catalysed reaction is tRNA(Arg) + L-arginine + ATP = L-arginyl-tRNA(Arg) + AMP + diphosphate. In Kocuria rhizophila (strain ATCC 9341 / DSM 348 / NBRC 103217 / DC2201), this protein is Arginine--tRNA ligase.